Here is a 427-residue protein sequence, read N- to C-terminus: Inward rectifier potassium channel 2 (427 aa).

Residues 1–81 (MGSVRTNRYS…IFTTCVDIRW (81 aa)) are Cytoplasmic-facing. The helical transmembrane segment at 82–106 (RWMLVIFCLTFILSWLFFGCVFWLI) threads the bilayer. Topologically, residues 107–128 (ALLHGDLENQENNKPCVSQVSS) are extracellular. The helical; Pore-forming intramembrane region spans 129-140 (FTAAFLFSIETQ). Residues 141 to 147 (TTIGYGF) constitute an intramembrane region (pore-forming). The Selectivity filter signature appears at 142–147 (TIGYGF). The Extracellular portion of the chain corresponds to 148–156 (RCVTDECPI). A helical transmembrane segment spans residues 157–178 (AVFMVVFQSIVGCIIDAFIIGA). The Cytoplasmic portion of the chain corresponds to 179–427 (VMAKMAKPKK…PRPLRRESEI (249 aa)). Positions 181–208 (AKMAKPKKRNETLVFSHNAVVAMRDGKL) are polyphosphoinositide (PIP2)-binding. The tract at residues 386-427 (EEDEIDTGVPESTSTDTHPDMDHHNQAGVPLEPRPLRRESEI) is disordered. The short motif at 425–427 (SEI) is the PDZ-binding element.

The protein belongs to the inward rectifier-type potassium channel (TC 1.A.2.1) family. KCNJ2 subfamily. As to quaternary structure, homotetramer. Homomultimeric and heteromultimeric association with KCNJ4/Kir2.3, resulting in an enhanced G-protein-induced current. Associates, via its PDZ-recognition domain, with a complex containing LIN7A, LIN7B, LIN7C, DLG1, CASK and APBA1. In terms of tissue distribution, found in the apical basilar papilla of the inner ear, brain, muscle, cerebellum, heart and liver.

It localises to the cell membrane. The protein resides in the sarcolemma. It is found in the T-tubule. It carries out the reaction K(+)(in) = K(+)(out). Its activity is regulated as follows. Activated by phosphatidylinositol 4,5 biphosphate (PtdIns(4,5)P2). Inward rectifier potassium channels are characterized by a greater tendency to allow potassium to flow into the cell rather than out of it. Their voltage dependence is regulated by the concentration of extracellular potassium; as external potassium is raised, the voltage range of the channel opening shifts to more positive voltages. The inward rectification is mainly due to the blockage of outward current by internal magnesium. Can be blocked by external barium. Probably participates in establishing action potential waveform and excitability of neuronal and muscle tissues. This chain is Inward rectifier potassium channel 2 (KCNJ2), found in Gallus gallus (Chicken).